A 364-amino-acid polypeptide reads, in one-letter code: Aminomethyltransferase (364 aa).

Belongs to the GcvT family. In terms of assembly, the glycine cleavage system is composed of four proteins: P, T, L and H.

It carries out the reaction N(6)-[(R)-S(8)-aminomethyldihydrolipoyl]-L-lysyl-[protein] + (6S)-5,6,7,8-tetrahydrofolate = N(6)-[(R)-dihydrolipoyl]-L-lysyl-[protein] + (6R)-5,10-methylene-5,6,7,8-tetrahydrofolate + NH4(+). Functionally, the glycine cleavage system catalyzes the degradation of glycine. The polypeptide is Aminomethyltransferase (Salmonella dublin (strain CT_02021853)).